Reading from the N-terminus, the 325-residue chain is 7,8-didemethyl-8-hydroxy-5-deazariboflavin synthase (325 aa).

The Radical SAM core domain maps to 1 to 241 (MTYSKNVFVP…SDIAVQVAPN (241 aa)). Residues cysteine 15, cysteine 19, and cysteine 22 each coordinate [4Fe-4S] cluster.

It belongs to the radical SAM superfamily. CofG family. As to quaternary structure, consists of two subunits, CofG and CofH. [4Fe-4S] cluster serves as cofactor.

The enzyme catalyses 5-amino-5-(4-hydroxybenzyl)-6-(D-ribitylimino)-5,6-dihydrouracil + S-adenosyl-L-methionine = 7,8-didemethyl-8-hydroxy-5-deazariboflavin + 5'-deoxyadenosine + L-methionine + NH4(+) + H(+). Its pathway is cofactor biosynthesis; coenzyme F0 biosynthesis. Functionally, catalyzes the radical-mediated synthesis of 7,8-didemethyl-8-hydroxy-5-deazariboflavin from 5-amino-5-(4-hydroxybenzyl)-6-(D-ribitylimino)-5,6-dihydrouracil. This is 7,8-didemethyl-8-hydroxy-5-deazariboflavin synthase from Methanosarcina barkeri (strain Fusaro / DSM 804).